The sequence spans 361 residues: Transposase A from transposon Tn554 (361 aa).

The 98-residue stretch at 23–120 (YQLIEPVMKF…VVMSFLDYLS (98 aa)) folds into the Core-binding (CB) domain. The Tyr recombinase domain maps to 163–351 (KQIRTLRSKE…SDQDMKNEFN (189 aa)). Residues Arg-198, Lys-232, His-302, Arg-305, and His-328 contribute to the active site. Residue Tyr-338 is the O-(3'-phospho-DNA)-tyrosine intermediate of the active site.

This sequence belongs to the 'phage' integrase family.

Its function is as follows. One of three proteins encoded by transposon Tn554 required for its transposition. The sequence is that of Transposase A from transposon Tn554 (tnpA1) from Staphylococcus aureus (strain Mu50 / ATCC 700699).